The sequence spans 451 residues: GTPase Der (451 aa).

EngA-type G domains lie at Pro-5–Pro-170 and Ile-186–Phe-359. Residues Gly-11–Ser-18, Asp-58–Phe-62, Asn-122–Glu-125, Gly-192–Ser-199, Asp-239–Leu-243, and Asn-304–Asp-307 each bind GTP. The KH-like domain occupies Ala-360–Arg-444.

Belongs to the TRAFAC class TrmE-Era-EngA-EngB-Septin-like GTPase superfamily. EngA (Der) GTPase family. In terms of assembly, associates with the 50S ribosomal subunit.

In terms of biological role, GTPase that plays an essential role in the late steps of ribosome biogenesis. The sequence is that of GTPase Der from Bordetella bronchiseptica (strain ATCC BAA-588 / NCTC 13252 / RB50) (Alcaligenes bronchisepticus).